The primary structure comprises 283 residues: Urease accessory protein UreD (283 aa).

Belongs to the UreD family. In terms of assembly, ureD, UreF and UreG form a complex that acts as a GTP-hydrolysis-dependent molecular chaperone, activating the urease apoprotein by helping to assemble the nickel containing metallocenter of UreC. The UreE protein probably delivers the nickel.

The protein localises to the cytoplasm. Its function is as follows. Required for maturation of urease via the functional incorporation of the urease nickel metallocenter. The protein is Urease accessory protein UreD of Rhodopseudomonas palustris (strain BisB5).